The chain runs to 259 residues: Ribonuclease HII (259 aa).

The RNase H type-2 domain occupies 69–257; it reads VAVCGVDEVG…VLEESQGLIY (189 aa). A divalent metal cation-binding residues include Asp75, Glu76, and Asp167.

Belongs to the RNase HII family. It depends on Mn(2+) as a cofactor. Mg(2+) is required as a cofactor.

The protein resides in the cytoplasm. It catalyses the reaction Endonucleolytic cleavage to 5'-phosphomonoester.. Functionally, endonuclease that specifically degrades the RNA of RNA-DNA hybrids. The sequence is that of Ribonuclease HII from Shouchella clausii (strain KSM-K16) (Alkalihalobacillus clausii).